Consider the following 154-residue polypeptide: Crossover junction endodeoxyribonuclease RuvC (154 aa).

Catalysis depends on residues Asp-7, Glu-67, and Asp-139. Residues Asp-7, Glu-67, and Asp-139 each coordinate Mg(2+).

This sequence belongs to the RuvC family. Homodimer which binds Holliday junction (HJ) DNA. The HJ becomes 2-fold symmetrical on binding to RuvC with unstacked arms; it has a different conformation from HJ DNA in complex with RuvA. In the full resolvosome a probable DNA-RuvA(4)-RuvB(12)-RuvC(2) complex forms which resolves the HJ. Mg(2+) serves as cofactor.

It is found in the cytoplasm. The catalysed reaction is Endonucleolytic cleavage at a junction such as a reciprocal single-stranded crossover between two homologous DNA duplexes (Holliday junction).. Functionally, the RuvA-RuvB-RuvC complex processes Holliday junction (HJ) DNA during genetic recombination and DNA repair. Endonuclease that resolves HJ intermediates. Cleaves cruciform DNA by making single-stranded nicks across the HJ at symmetrical positions within the homologous arms, yielding a 5'-phosphate and a 3'-hydroxyl group; requires a central core of homology in the junction. The consensus cleavage sequence is 5'-(A/T)TT(C/G)-3'. Cleavage occurs on the 3'-side of the TT dinucleotide at the point of strand exchange. HJ branch migration catalyzed by RuvA-RuvB allows RuvC to scan DNA until it finds its consensus sequence, where it cleaves and resolves the cruciform DNA. This is Crossover junction endodeoxyribonuclease RuvC from Synechococcus sp. (strain CC9605).